Reading from the N-terminus, the 101-residue chain is MAKKSSIEKNNRRKKMTKNAAPKRARLKAIIADKDLPMEERFAATLKLAEMPRNSSATRIRNRCEITGRARSVYRLNKLSRIAIRDLGSKGLVPGLVKSSW.

Over residues 1–10 (MAKKSSIEKN) the composition is skewed to basic and acidic residues. Residues 1–23 (MAKKSSIEKNNRRKKMTKNAAPK) form a disordered region. Residues 11–23 (NRRKKMTKNAAPK) show a composition bias toward basic residues.

Belongs to the universal ribosomal protein uS14 family. In terms of assembly, part of the 30S ribosomal subunit. Contacts proteins S3 and S10.

Functionally, binds 16S rRNA, required for the assembly of 30S particles and may also be responsible for determining the conformation of the 16S rRNA at the A site. The chain is Small ribosomal subunit protein uS14 from Rhodopseudomonas palustris (strain HaA2).